A 364-amino-acid polypeptide reads, in one-letter code: Caffeic acid 3-O-methyltransferase 2 (364 aa).

129-135 (MNQDKVL) is a substrate binding site. The substrate binding stretch occupies residues 161–179 (AFEYHGTDPRFNKVFNKGM). S-adenosyl-L-methionine contacts are provided by Gly207, Asp230, Asp250, Met251, and Lys264. His268 (proton acceptor) is an active-site residue.

It belongs to the class I-like SAM-binding methyltransferase superfamily. Cation-independent O-methyltransferase family. COMT subfamily. In terms of assembly, homodimer.

The catalysed reaction is (E)-caffeate + S-adenosyl-L-methionine = (E)-ferulate + S-adenosyl-L-homocysteine + H(+). It functions in the pathway aromatic compound metabolism; phenylpropanoid biosynthesis. Its function is as follows. Catalyzes the conversion of caffeic acid to ferulic acid and of 5-hydroxyferulic acid to sinapic acid. The resulting products may subsequently be converted to the corresponding alcohols that are incorporated into lignins. The polypeptide is Caffeic acid 3-O-methyltransferase 2 (OMT2) (Populus tremuloides (Quaking aspen)).